A 372-amino-acid chain; its full sequence is Lipoyl synthase, mitochondrial (372 aa).

[4Fe-4S] cluster-binding residues include Cys103, Cys108, Cys114, Cys134, Cys138, Cys141, and Ser349. The region spanning 119–338 (EHGTQTATIM…EERGNQLGFL (220 aa)) is the Radical SAM core domain.

This sequence belongs to the radical SAM superfamily. Lipoyl synthase family. It depends on [4Fe-4S] cluster as a cofactor.

The protein localises to the mitochondrion. It carries out the reaction [[Fe-S] cluster scaffold protein carrying a second [4Fe-4S](2+) cluster] + N(6)-octanoyl-L-lysyl-[protein] + 2 oxidized [2Fe-2S]-[ferredoxin] + 2 S-adenosyl-L-methionine + 4 H(+) = [[Fe-S] cluster scaffold protein] + N(6)-[(R)-dihydrolipoyl]-L-lysyl-[protein] + 4 Fe(3+) + 2 hydrogen sulfide + 2 5'-deoxyadenosine + 2 L-methionine + 2 reduced [2Fe-2S]-[ferredoxin]. It functions in the pathway protein modification; protein lipoylation via endogenous pathway; protein N(6)-(lipoyl)lysine from octanoyl-[acyl-carrier-protein]: step 2/2. Its function is as follows. Catalyzes the radical-mediated insertion of two sulfur atoms into the C-6 and C-8 positions of the octanoyl moiety bound to the lipoyl domains of lipoate-dependent enzymes, thereby converting the octanoylated domains into lipoylated derivatives. The protein is Lipoyl synthase, mitochondrial of Drosophila willistoni (Fruit fly).